Reading from the N-terminus, the 373-residue chain is Cathecol O-methyltransferase 1 (373 aa).

The S-adenosyl-L-homocysteine site is built by Gly-209, Asp-232, Asp-252, Met-253, Met-265, and Lys-266. Asp-232 serves as a coordination point for S-adenosyl-L-methionine. The active-site Proton acceptor is His-279.

The protein belongs to the class I-like SAM-binding methyltransferase superfamily. Cation-independent O-methyltransferase family. COMT subfamily.

The catalysed reaction is catechol + S-adenosyl-L-methionine = guaiacol + S-adenosyl-L-homocysteine + H(+). Its function is as follows. O-methyltransferase that catalyzes the conversion of catechol to guaiacol. Involved in the production of guaiacol in fruits. This Solanum lycopersicum (Tomato) protein is Cathecol O-methyltransferase 1.